The following is a 104-amino-acid chain: Large ribosomal subunit protein bL21 (104 aa).

The protein belongs to the bacterial ribosomal protein bL21 family. As to quaternary structure, part of the 50S ribosomal subunit. Contacts protein L20.

Functionally, this protein binds to 23S rRNA in the presence of protein L20. The polypeptide is Large ribosomal subunit protein bL21 (Helicobacter pylori (strain HPAG1)).